The primary structure comprises 315 residues: Thioredoxin reductase (315 aa).

45 to 52 (EGNTPGGK) contacts FAD. A disulfide bridge links C145 with C148. 288-297 (DCRSKSFRQI) lines the FAD pocket.

This sequence belongs to the class-II pyridine nucleotide-disulfide oxidoreductase family. In terms of assembly, homodimer. Requires FAD as cofactor.

It localises to the cytoplasm. It catalyses the reaction [thioredoxin]-dithiol + NADP(+) = [thioredoxin]-disulfide + NADPH + H(+). In Mycoplasma genitalium (strain ATCC 33530 / DSM 19775 / NCTC 10195 / G37) (Mycoplasmoides genitalium), this protein is Thioredoxin reductase (trxB).